A 1693-amino-acid polypeptide reads, in one-letter code: Latrophilin Cirl (1693 aa).

Topologically, residues 1-753 (MLPTILSISY…LFTMFDGNMR (753 aa)) are extracellular. Residues 25-114 (ACEGKKLTIE…KYLEAHYQCI (90 aa)) enclose the SUEL-type lectin domain. A glycan (N-linked (GlcNAc...) asparagine) is linked at asparagine 142. Polar residues-rich tracts occupy residues 185–198 (TAVT…STTA) and 256–265 (NVTSPSNTRI). The interval 185–299 (TAVTHSTPWS…PGTAASGSVA (115 aa)) is disordered. The N-linked (GlcNAc...) asparagine glycan is linked to asparagine 256. A compositionally biased stretch (low complexity) spans 275–299 (DDGTLLTTKSSPNRPPGTAASGSVA). Asparagine 301, asparagine 340, asparagine 397, asparagine 641, asparagine 689, and asparagine 716 each carry an N-linked (GlcNAc...) asparagine glycan. Residues 375–399 (YDEYDDDASSTTPAPSGGDCLHNSS) are disordered. The 177-residue stretch at 564–740 (KKSKIYSSVV…AILMDVVDEH (177 aa)) folds into the GAIN-B domain. 2 disulfide bridges follow: cysteine 695-cysteine 722 and cysteine 710-cysteine 724. A GPS region spans residues 695–740 (CVFWNYIDHAWSANGCSLESTNRTHSVCSCNHLTNFAILMDVVDEH). Residues 754 to 774 (IFIYISIGICVVFIVIALLTL) traverse the membrane as a helical segment. The Cytoplasmic portion of the chain corresponds to 775-787 (KLFNGVFVKSART). Residues 788–808 (SIYTSIYLCLLAIELLFLLGI) traverse the membrane as a helical segment. Residues 809 to 814 (EQTETS) lie on the Extracellular side of the membrane. The helical transmembrane segment at 815–835 (IFCGFITIFLHCAILSGTAWF) threads the bilayer. Topologically, residues 836 to 861 (CYEAFHSYSTLTSDELLLEVDQTPKV) are cytoplasmic. A helical membrane pass occupies residues 862–882 (NCYYLLSYGLSLSVVAISLVI). At 883-906 (DPSTYTQNDYCVLMEANALFYATF) the chain is on the extracellular side. A helical membrane pass occupies residues 907-927 (VVPVLVFFVAAIGYTFLSWII). The Cytoplasmic portion of the chain corresponds to 928-954 (MCRKSRTGLKTKEHTRLASVRFDIRCS). The chain crosses the membrane as a helical span at residues 955-975 (FVFLLLLSAVWCSAYFYLRGA). Over 976–985 (KMDDDTADVY) the chain is Extracellular. The helical transmembrane segment at 986 to 1006 (GYCFICFNTLLGLYIFVFHCI) threads the bilayer. The Cytoplasmic portion of the chain corresponds to 1007-1693 (QNEKIRREYR…VRCYLEPLAK (687 aa)). The residue at position 1142 (serine 1142) is a Phosphoserine. 5 disordered regions span residues 1156 to 1194 (HKQQ…LKTP), 1220 to 1247 (KPNS…LHSR), 1294 to 1319 (QQQL…AEQH), 1433 to 1521 (GGGS…SDER), and 1601 to 1673 (LAVN…QQRH). Serine 1239 and serine 1246 each carry phosphoserine. Positions 1294–1309 (QQQLRRQQLHQQQQQL) are enriched in low complexity. Phosphoserine occurs at positions 1310 and 1311. Residues 1439–1464 (GGSVSSRSQQQQLKKQQQQQSLAQQR) are compositionally biased toward low complexity. Composition is skewed to acidic residues over residues 1472-1486 (DDDD…EEAT) and 1496-1507 (CDEDEEEDESDL). Residues 1508 to 1521 (EHDAHGLPPQSDER) show a composition bias toward basic and acidic residues. Low complexity predominate over residues 1630 to 1655 (LQKLSPQSTTSSSSHTSHSNPNLHPH). Over residues 1656 to 1672 (QLTHPHPHQHPPHHQQR) the composition is skewed to basic residues.

It belongs to the G-protein coupled receptor 2 family. LN-TM7 subfamily. In terms of assembly, forms a heterodimer, consisting of a large extracellular region non-covalently linked to a seven-transmembrane moiety. Post-translationally, proteolytically cleaved into 2 subunits, an extracellular subunit and a seven-transmembrane subunit.

It localises to the cell membrane. The polypeptide is Latrophilin Cirl (Drosophila sechellia (Fruit fly)).